A 369-amino-acid polypeptide reads, in one-letter code: Anhydro-N-acetylmuramic acid kinase (369 aa).

Residue 12 to 19 (GTSLDGVD) coordinates ATP.

It belongs to the anhydro-N-acetylmuramic acid kinase family.

It catalyses the reaction 1,6-anhydro-N-acetyl-beta-muramate + ATP + H2O = N-acetyl-D-muramate 6-phosphate + ADP + H(+). Its pathway is amino-sugar metabolism; 1,6-anhydro-N-acetylmuramate degradation. It functions in the pathway cell wall biogenesis; peptidoglycan recycling. Catalyzes the specific phosphorylation of 1,6-anhydro-N-acetylmuramic acid (anhMurNAc) with the simultaneous cleavage of the 1,6-anhydro ring, generating MurNAc-6-P. Is required for the utilization of anhMurNAc either imported from the medium or derived from its own cell wall murein, and thus plays a role in cell wall recycling. The sequence is that of Anhydro-N-acetylmuramic acid kinase from Escherichia coli O139:H28 (strain E24377A / ETEC).